Consider the following 124-residue polypeptide: ATP synthase epsilon chain (124 aa).

Belongs to the ATPase epsilon chain family. As to quaternary structure, F-type ATPases have 2 components, CF(1) - the catalytic core - and CF(0) - the membrane proton channel. CF(1) has five subunits: alpha(3), beta(3), gamma(1), delta(1), epsilon(1). CF(0) has three main subunits: a, b and c.

Its subcellular location is the cell membrane. Its function is as follows. Produces ATP from ADP in the presence of a proton gradient across the membrane. The chain is ATP synthase epsilon chain from Corynebacterium glutamicum (strain ATCC 13032 / DSM 20300 / JCM 1318 / BCRC 11384 / CCUG 27702 / LMG 3730 / NBRC 12168 / NCIMB 10025 / NRRL B-2784 / 534).